Reading from the N-terminus, the 566-residue chain is Liver carboxylesterase (566 aa).

The N-terminal stretch at 1-18 is a signal peptide; sequence MWLLPLVLTSLASSATWA. Residue Asn-80 is glycosylated (N-linked (GlcNAc...) asparagine). A disulfide bridge connects residues Cys-88 and Cys-117. The Acyl-ester intermediate role is filled by Ser-222. Residues Cys-274 and Cys-285 are joined by a disulfide bond. Glu-354 (charge relay system) is an active-site residue. Ser-379 is modified (phosphoserine). The active-site Charge relay system is His-467. The Prevents secretion from ER motif lies at 563-566; that stretch reads HAEL.

Belongs to the type-B carboxylesterase/lipase family.

It localises to the endoplasmic reticulum lumen. The enzyme catalyses a carboxylic ester + H2O = an alcohol + a carboxylate + H(+). With respect to regulation, activated by CHAPS at concentrations of up to 130 mM, higher concentrations reduce activity. In the presence of CHAPS, activity is stimulated by non-ionic detergents. Inhibited by the esterase inhibitors diisopropylfluorophosphate and phenylmethylsulfonyl fluoride. Involved in the detoxification of xenobiotics and in the activation of ester and amide prodrugs. Active towards triacylglycerides containing short-chain fatty acids from C2 to C6, and 1(3)-monoacylglycerols containing fatty acids from C2 to C12. Inactive on long-chain triacylglycerols and diacylglycerol. Hydrolyzes aromatic and alkyl esters and vitamin A acetate. The hydrolysis rate depends upon the amino acid promoiety and the esterification site of the prodrug. Aromatic promoieties are favored, highest rates are observed with phenylalanyl progdrugs, hydrolysis of valyl and isoleucyl prodrugs is less efficient. With floxuridine prodrugs, activity is higher on 5' monoesters than on 3' monoesters. With gemcitabine prodrugs, activity is higher on 3' monoesters than on 5' monoesters. This Sus scrofa (Pig) protein is Liver carboxylesterase.